The chain runs to 529 residues: Neuronal acetylcholine receptor subunit alpha-2 (529 aa).

The signal sequence occupies residues 1–26; sequence MGPSCPVFLSFTKLSLWWLLLTPAGG. The segment at 27–56 is disordered; sequence EEAKRPPPRAPGDPLSSPSPTALPQGGSHT. Over 27–264 the chain is Extracellular; sequence EEAKRPPPRA…VTYAFVIRRL (238 aa). Residues N79 and N129 are each glycosylated (N-linked (GlcNAc...) asparagine). An intrachain disulfide couples C183 to C197. The N-linked (GlcNAc...) asparagine glycan is linked to N235. An intrachain disulfide couples C247 to C248. The next 3 helical transmembrane spans lie at 265 to 289, 297 to 315, and 331 to 352; these read PLFY…VFYL, ITLC…LLIT, and YLLF…VLNV. Residues 353–502 are Cytoplasmic-facing; that stretch reads HHRSPSTHTM…WKYVAMVIDR (150 aa). The helical transmembrane segment at 503–521 threads the bilayer; sequence IFLWLFIIVCFLGTIGLFL.

Belongs to the ligand-gated ion channel (TC 1.A.9) family. Acetylcholine receptor (TC 1.A.9.1) subfamily. Alpha-2/CHRNA2 sub-subfamily. As to quaternary structure, neuronal AChR is composed of two different types of subunits: alpha and non-alpha (beta). CHRNA2/alpha-2 subunit can be combined to CHRNB2/beta-2 or CHRNB4/beta-4 to give rise to functional receptors. Both CHRNA2:CHRNB2 and CHRNA2:CHRNB4 nAChR complexes are heteropentamers with two subtypes: LS (low agonist sensitivity) with a (CHRNA2)3:(CHRNB2/4)2 and HS (high agonist sensitivity) with a (CHRNA2)2:(CHRNB2/4)3 stoichiometries; the subtypes differ in their subunit binding interfaces which are involved in ligand binding.

It localises to the synaptic cell membrane. It is found in the cell membrane. It carries out the reaction Ca(2+)(in) = Ca(2+)(out). The catalysed reaction is K(+)(in) = K(+)(out). The enzyme catalyses Na(+)(in) = Na(+)(out). Component of neuronal acetylcholine receptors (nAChRs) that function as pentameric, ligand-gated cation channels with high calcium permeability among other activities. nAChRs are excitatory neurotrasnmitter receptors formed by a collection of nAChR subunits known to mediate synaptic transmission in the nervous system and the neuromuscular junction. Each nAchR subunit confers differential attributes to channel properties, including activation, deactivation and desensitization kinetics, pH sensitivity, cation permeability, and binding to allosteric modulators. CHRNA2 forms heteropentameric neuronal acetylcholine receptors with CHRNB2 and CHRNB4 and plays a role in nicotine dependence. The protein is Neuronal acetylcholine receptor subunit alpha-2 of Homo sapiens (Human).